Here is a 343-residue protein sequence, read N- to C-terminus: Ribosomal RNA small subunit methyltransferase C (343 aa).

This sequence belongs to the methyltransferase superfamily. RsmC family. As to quaternary structure, monomer.

The protein localises to the cytoplasm. The enzyme catalyses guanosine(1207) in 16S rRNA + S-adenosyl-L-methionine = N(2)-methylguanosine(1207) in 16S rRNA + S-adenosyl-L-homocysteine + H(+). Its function is as follows. Specifically methylates the guanine in position 1207 of 16S rRNA in the 30S particle. The sequence is that of Ribosomal RNA small subunit methyltransferase C from Escherichia fergusonii (strain ATCC 35469 / DSM 13698 / CCUG 18766 / IAM 14443 / JCM 21226 / LMG 7866 / NBRC 102419 / NCTC 12128 / CDC 0568-73).